A 424-amino-acid polypeptide reads, in one-letter code: GTPase Obg (424 aa).

One can recognise an Obg domain in the interval M1–L158. Residues A159–S331 form the OBG-type G domain. GTP is bound by residues G165–S172, F190–K194, D212–G215, N282–D285, and S312–A314. Residues S172 and T192 each contribute to the Mg(2+) site. One can recognise an OCT domain in the interval R345–L424.

The protein belongs to the TRAFAC class OBG-HflX-like GTPase superfamily. OBG GTPase family. In terms of assembly, monomer. It depends on Mg(2+) as a cofactor.

Its subcellular location is the cytoplasm. In terms of biological role, an essential GTPase which binds GTP, GDP and possibly (p)ppGpp with moderate affinity, with high nucleotide exchange rates and a fairly low GTP hydrolysis rate. Plays a role in control of the cell cycle, stress response, ribosome biogenesis and in those bacteria that undergo differentiation, in morphogenesis control. The polypeptide is GTPase Obg (Clostridium botulinum (strain Langeland / NCTC 10281 / Type F)).